We begin with the raw amino-acid sequence, 428 residues long: D-amino acid dehydrogenase (428 aa).

3 to 17 (VVILGSGVVGVASAY) is a binding site for FAD.

This sequence belongs to the DadA oxidoreductase family. The cofactor is FAD.

The enzyme catalyses a D-alpha-amino acid + A + H2O = a 2-oxocarboxylate + AH2 + NH4(+). It participates in amino-acid degradation; D-alanine degradation; NH(3) and pyruvate from D-alanine: step 1/1. Its function is as follows. Oxidative deamination of D-amino acids. The chain is D-amino acid dehydrogenase from Burkholderia thailandensis (strain ATCC 700388 / DSM 13276 / CCUG 48851 / CIP 106301 / E264).